The sequence spans 1102 residues: ATP-dependent DNA helicase MPH1 (1102 aa).

The segment at Ala-19 to Phe-55 is disordered. A compositionally biased stretch (polar residues) spans Asp-38–Asp-49. Residues Ile-147–His-315 enclose the Helicase ATP-binding domain. An ATP-binding site is contributed by Leu-160–Thr-167. The DEAH box motif lies at Asp-263–His-266. The Helicase C-terminal domain occupies Asn-490–Leu-651. Disordered stretches follow at residues Pro-672 to Pro-702, Ala-720 to Ser-743, Ser-818 to Tyr-837, and Ser-858 to Gly-1102. Residues Arg-687–Phe-699 show a composition bias toward basic residues. The segment covering Glu-822–Tyr-837 has biased composition (basic and acidic residues). Over residues Ser-1003–Lys-1019 the composition is skewed to low complexity. Acidic residues predominate over residues Ser-1069–Val-1082.

The protein belongs to the DEAD box helicase family. DEAH subfamily. FANCM sub-subfamily. Interacts with the MHF histone-fold complex to form the FANCM-MHF complex.

It localises to the nucleus. The enzyme catalyses ATP + H2O = ADP + phosphate + H(+). ATP-dependent DNA helicase involved in DNA damage repair by homologous recombination and in genome maintenance. Capable of unwinding D-loops. Plays a role in limiting crossover recombinants during mitotic DNA double-strand break (DSB) repair. Component of a FANCM-MHF complex which promotes gene conversion at blocked replication forks, probably by reversal of the stalled fork. The chain is ATP-dependent DNA helicase MPH1 from Pyricularia oryzae (strain 70-15 / ATCC MYA-4617 / FGSC 8958) (Rice blast fungus).